The chain runs to 211 residues: Thiamine-phosphate synthase (211 aa).

4-amino-2-methyl-5-(diphosphooxymethyl)pyrimidine-binding positions include 37–41 (QLRIK) and Asn69. Mg(2+)-binding residues include Asp70 and Asp89. Ser108 provides a ligand contact to 4-amino-2-methyl-5-(diphosphooxymethyl)pyrimidine. 134–136 (TQT) contributes to the 2-[(2R,5Z)-2-carboxy-4-methylthiazol-5(2H)-ylidene]ethyl phosphate binding site. Residue Lys137 participates in 4-amino-2-methyl-5-(diphosphooxymethyl)pyrimidine binding. 2-[(2R,5Z)-2-carboxy-4-methylthiazol-5(2H)-ylidene]ethyl phosphate contacts are provided by residues Gly166 and 186 to 187 (VS).

It belongs to the thiamine-phosphate synthase family. Mg(2+) is required as a cofactor.

It catalyses the reaction 2-[(2R,5Z)-2-carboxy-4-methylthiazol-5(2H)-ylidene]ethyl phosphate + 4-amino-2-methyl-5-(diphosphooxymethyl)pyrimidine + 2 H(+) = thiamine phosphate + CO2 + diphosphate. The enzyme catalyses 2-(2-carboxy-4-methylthiazol-5-yl)ethyl phosphate + 4-amino-2-methyl-5-(diphosphooxymethyl)pyrimidine + 2 H(+) = thiamine phosphate + CO2 + diphosphate. The catalysed reaction is 4-methyl-5-(2-phosphooxyethyl)-thiazole + 4-amino-2-methyl-5-(diphosphooxymethyl)pyrimidine + H(+) = thiamine phosphate + diphosphate. Its pathway is cofactor biosynthesis; thiamine diphosphate biosynthesis; thiamine phosphate from 4-amino-2-methyl-5-diphosphomethylpyrimidine and 4-methyl-5-(2-phosphoethyl)-thiazole: step 1/1. In terms of biological role, condenses 4-methyl-5-(beta-hydroxyethyl)thiazole monophosphate (THZ-P) and 2-methyl-4-amino-5-hydroxymethyl pyrimidine pyrophosphate (HMP-PP) to form thiamine monophosphate (TMP). This is Thiamine-phosphate synthase from Salmonella typhimurium (strain LT2 / SGSC1412 / ATCC 700720).